The sequence spans 510 residues: MNKELVLVVDFGGQYNQLIARRVRENRVYCEIVPYTTSIEDIKEKAPKGIIFTGGPNSVYGENAPRVRKELFDLGIPVLGICYGDQLMAHSLEGEVTSPEKREYGKTDVNLDNSSLLFKDMKEKDQCWMSHTDYISKVPKGFKIIATTDECPCAAMENAEKKLYGVQFHPEVEHTLFGKKMLKNFLFNVCNLKGDWSMSSFAEQQIKAIKEKVGDKKVICALSGGVDSSVAAVIVHKAIGKQLTCIFVDHGLLRKDEGDQVEKIFKDQFEMNLIRVNAQDRFLGKLKGVSDPERKRKIIGEEFIRVFEEEAKKLGDISFLVQGTIYPDIVESGTNTSATIKSHHNVGGLPEDMEFKLIEPLRELFKDEVRAVGEELGIPHKLVWRQPFPGPGLAIRVLGEVTEEKLAITREADAIFREEIAKAGLEEKIWQYFACLPNIQSVGVMGDERTYCHTIALRAVTSSDAMTSDWARIPYEVLDKVSRRIVNEVKEVNRIVYDVTSKPPATIEWE.

The Glutamine amidotransferase type-1 domain maps to 5-195 (LVLVVDFGGQ…LFNVCNLKGD (191 aa)). Cysteine 82 serves as the catalytic Nucleophile. Residues histidine 169 and glutamate 171 contribute to the active site. The GMPS ATP-PPase domain maps to 196 to 385 (WSMSSFAEQQ…LGIPHKLVWR (190 aa)). Residue 223–229 (SGGVDSS) coordinates ATP.

Homodimer.

It carries out the reaction XMP + L-glutamine + ATP + H2O = GMP + L-glutamate + AMP + diphosphate + 2 H(+). It functions in the pathway purine metabolism; GMP biosynthesis; GMP from XMP (L-Gln route): step 1/1. Its function is as follows. Catalyzes the synthesis of GMP from XMP. The sequence is that of GMP synthase [glutamine-hydrolyzing] from Clostridium botulinum (strain Loch Maree / Type A3).